The sequence spans 365 residues: Eukaryotic translation initiation factor 3 subunit H (365 aa).

One can recognise an MPN domain in the interval 11–160 (VKVEALVVMK…LRAFRLSPKF (150 aa)).

It belongs to the eIF-3 subunit H family. As to quaternary structure, component of the eukaryotic translation initiation factor 3 (eIF-3) complex.

It localises to the cytoplasm. Component of the eukaryotic translation initiation factor 3 (eIF-3) complex, which is involved in protein synthesis of a specialized repertoire of mRNAs and, together with other initiation factors, stimulates binding of mRNA and methionyl-tRNAi to the 40S ribosome. The eIF-3 complex specifically targets and initiates translation of a subset of mRNAs involved in cell proliferation. This is Eukaryotic translation initiation factor 3 subunit H from Aspergillus terreus (strain NIH 2624 / FGSC A1156).